Consider the following 247-residue polypeptide: Protein GrpE (247 aa).

The segment covering 31-49 (QKEETKTTNKDNQKEDETV) has biased composition (basic and acidic residues). The tract at residues 31-79 (QKEETKTTNKDNQKEDETVKNQSNQSNQSNQTKQTNTKQQKHQPKENSH) is disordered. The segment covering 50-68 (KNQSNQSNQSNQTKQTNTK) has biased composition (low complexity).

It belongs to the GrpE family. As to quaternary structure, homodimer.

It is found in the cytoplasm. Functionally, participates actively in the response to hyperosmotic and heat shock by preventing the aggregation of stress-denatured proteins, in association with DnaK and GrpE. It is the nucleotide exchange factor for DnaK and may function as a thermosensor. Unfolded proteins bind initially to DnaJ; upon interaction with the DnaJ-bound protein, DnaK hydrolyzes its bound ATP, resulting in the formation of a stable complex. GrpE releases ADP from DnaK; ATP binding to DnaK triggers the release of the substrate protein, thus completing the reaction cycle. Several rounds of ATP-dependent interactions between DnaJ, DnaK and GrpE are required for fully efficient folding. This Onion yellows phytoplasma (strain OY-M) protein is Protein GrpE.